A 295-amino-acid chain; its full sequence is Protoheme IX farnesyltransferase (295 aa).

9 helical membrane-spanning segments follow: residues 30-50 (LVVL…HPLI), 51-71 (AVIS…INMW), 93-115 (ISRS…IMMI), 119-136 (YISG…IYVY), 148-168 (IVIG…SVTG), 175-195 (LVLF…LSLL), 219-239 (IHIL…GLFL), 244-264 (LYEI…FQVF), and 275-295 (MFTY…LSSF).

This sequence belongs to the UbiA prenyltransferase family. Protoheme IX farnesyltransferase subfamily.

It is found in the cell inner membrane. It catalyses the reaction heme b + (2E,6E)-farnesyl diphosphate + H2O = Fe(II)-heme o + diphosphate. The protein operates within porphyrin-containing compound metabolism; heme O biosynthesis; heme O from protoheme: step 1/1. Functionally, converts heme B (protoheme IX) to heme O by substitution of the vinyl group on carbon 2 of heme B porphyrin ring with a hydroxyethyl farnesyl side group. This chain is Protoheme IX farnesyltransferase, found in Ehrlichia ruminantium (strain Welgevonden).